A 337-amino-acid chain; its full sequence is Basic membrane protein A2 (337 aa).

The N-terminal stretch at 1-17 is a signal peptide; that stretch reads MNKLLLLILFECIIFLS. A lipid anchor (N-palmitoyl cysteine) is attached at Cys18. A lipid anchor (S-diacylglycerol cysteine) is attached at Cys18.

It belongs to the BMP lipoprotein family. Monomer.

It is found in the cell inner membrane. Immunogenic protein. May be part of an ABC-type nucleoside uptake system involved in the purine salvage pathway. The sequence is that of Basic membrane protein A2 (bmpA2) from Borrelia garinii subsp. bavariensis (strain ATCC BAA-2496 / DSM 23469 / PBi) (Borreliella bavariensis).